Here is a 435-residue protein sequence, read N- to C-terminus: 3-phosphoshikimate 1-carboxyvinyltransferase (435 aa).

Positions 21, 22, and 26 each coordinate 3-phosphoshikimate. Residue K21 participates in phosphoenolpyruvate binding. Phosphoenolpyruvate-binding residues include G100 and R128. 3-phosphoshikimate-binding residues include S171, S172, Q173, S199, D313, and K340. Residue Q173 coordinates phosphoenolpyruvate. D313 (proton acceptor) is an active-site residue. R344, R386, and K412 together coordinate phosphoenolpyruvate.

The protein belongs to the EPSP synthase family. As to quaternary structure, monomer.

It is found in the cytoplasm. It catalyses the reaction 3-phosphoshikimate + phosphoenolpyruvate = 5-O-(1-carboxyvinyl)-3-phosphoshikimate + phosphate. It functions in the pathway metabolic intermediate biosynthesis; chorismate biosynthesis; chorismate from D-erythrose 4-phosphate and phosphoenolpyruvate: step 6/7. Catalyzes the transfer of the enolpyruvyl moiety of phosphoenolpyruvate (PEP) to the 5-hydroxyl of shikimate-3-phosphate (S3P) to produce enolpyruvyl shikimate-3-phosphate and inorganic phosphate. The sequence is that of 3-phosphoshikimate 1-carboxyvinyltransferase from Clostridium novyi (strain NT).